The primary structure comprises 406 residues: 2,3-bisphosphoglycerate-independent phosphoglycerate mutase (406 aa).

This sequence belongs to the BPG-independent phosphoglycerate mutase family. A-PGAM subfamily.

The catalysed reaction is (2R)-2-phosphoglycerate = (2R)-3-phosphoglycerate. Its pathway is carbohydrate degradation; glycolysis; pyruvate from D-glyceraldehyde 3-phosphate: step 3/5. In terms of biological role, catalyzes the interconversion of 2-phosphoglycerate and 3-phosphoglycerate. The chain is 2,3-bisphosphoglycerate-independent phosphoglycerate mutase from Methanococcus maripaludis (strain C7 / ATCC BAA-1331).